The chain runs to 190 residues: CASP-like protein 1U3 (190 aa).

The Cytoplasmic portion of the chain corresponds to 1–24 (MNGATVQPSYKEAGPVRYHPMHDC). A helical transmembrane segment spans residues 25-45 (LSLILRLLTLGATIAAIVAML). The Extracellular segment spans residues 46-70 (KSTQTVPTLLGPHTARWKDFPAFEW). A helical membrane pass occupies residues 71-91 (FVIGNSIVLVYAALGTLAACL). At 92–113 (SLFTRRGPLSYTKTAWLTFLCD) the chain is on the cytoplasmic side. The chain crosses the membrane as a helical span at residues 114-134 (FICSCALISAGSTALGVAWIG). Residues 135 to 158 (KHGQHSAFWNAVCPTVDRFCDYVQ) are Extracellular-facing. The helical transmembrane segment at 159-179 (GALIATLCGFIFQALSTVIAA) threads the bilayer. The Cytoplasmic portion of the chain corresponds to 180–190 (SALHNLATHRH).

It belongs to the Casparian strip membrane proteins (CASP) family. As to quaternary structure, homodimer and heterodimers.

The protein resides in the cell membrane. In Physcomitrium patens (Spreading-leaved earth moss), this protein is CASP-like protein 1U3.